The following is a 146-amino-acid chain: Large ribosomal subunit protein bL19 (146 aa).

It belongs to the bacterial ribosomal protein bL19 family.

Its function is as follows. This protein is located at the 30S-50S ribosomal subunit interface and may play a role in the structure and function of the aminoacyl-tRNA binding site. This chain is Large ribosomal subunit protein bL19, found in Bartonella henselae (strain ATCC 49882 / DSM 28221 / CCUG 30454 / Houston 1) (Rochalimaea henselae).